Here is a 412-residue protein sequence, read N- to C-terminus: MRSAPTARAALVLCAATAGLLSAQGSPEPPEAPRFASWDEVNVLAHGLLQLGRGLREHVERTRGQLGALERRLSACGAACKDPEGSAVPPLTAGNLVPSQSDAAPETLHSLQTQLKAQNSKIQQLFQKVAQQQRHLEKQHLRIQNLQGQLDHLAPMHLGHGVAKAARRKRLPKMTQPAGPAHNISRLHRLPRDCQELFEEGERQSGLFQIQPQGSPPFLVNCKMTSDGGWTVIQRRQDGSVDFNQPWEAYKDGFGDPKGEFWLGLEKVHRIMGDRGSRLAVQLQDWEGNAESLQFPVHLGGEDTAYSLQLTAPVASKLGATIDTPSGLSLPFSTWDQDHDLRGDKNCAKILSGGWWFGTCSHSNLNGQYFHSIPRQREQRKKGIFWKTWRGRYYPLQATTMLIQPTVAEAAS.

Residues 1–23 form the signal peptide; the sequence is MRSAPTARAALVLCAATAGLLSA. Residues 106-153 are a coiled coil; that stretch reads ETLHSLQTQLKAQNSKIQQLFQKVAQQQRHLEKQHLRIQNLQGQLDHL. Asparagine 183 carries N-linked (GlcNAc...) asparagine glycosylation. Residues 185 to 407 enclose the Fibrinogen C-terminal domain; sequence SRLHRLPRDC…ATTMLIQPTV (223 aa). Cystine bridges form between cysteine 194-cysteine 222 and cysteine 347-cysteine 360.

As to quaternary structure, homooligomer; disulfide-linked via Cys residues in the N-terminal part of the protein. The homooligomer undergoes proteolytic processing to release the ANGPTL4 C-terminal chain, which circulates as a monomer. The homooligomer unprocessed form is able to interact with the extracellular matrix. In terms of processing, N-glycosylated. Forms disulfide-linked dimers and tetramers. Post-translationally, cleaved into a smaller N-terminal chain and a larger chain that contains the fibrinogen C-terminal domain; both cleaved and uncleaved forms are detected in the extracellular space. The cleaved form is not present within the cell.

It localises to the secreted. Its subcellular location is the extracellular space. The protein resides in the extracellular matrix. Its function is as follows. Mediates inactivation of the lipoprotein lipase LPL, and thereby plays a role in the regulation of triglyceride clearance from the blood serum and in lipid metabolism. May also play a role in regulating glucose homeostasis and insulin sensitivity. Inhibits proliferation, migration, and tubule formation of endothelial cells and reduces vascular leakage. Upon heterologous expression, inhibits the adhesion of endothelial cell to the extracellular matrix (ECM), and inhibits the reorganization of the actin cytoskeleton, formation of actin stress fibers and focal adhesions in endothelial cells that have adhered to ANGPTL4-containing ECM (in vitro). Depending on context, may modulate tumor-related angiogenesis. In terms of biological role, mediates inactivation of the lipoprotein lipase LPL, and thereby plays an important role in the regulation of triglyceride clearance from the blood serum and in lipid metabolism. Has higher activity in LPL inactivation than the uncleaved protein. In Sus scrofa (Pig), this protein is Angiopoietin-related protein 4 (ANGPTL4).